Reading from the N-terminus, the 110-residue chain is MLNYLWFFLAALFEIAGCFAFWMWLRQGKSALWVIPALISLTLFALLLTRVEATYAGRAYAAYGGIYIIASIGWLAVVERIRPLGSDWIGVALCVIGATVILFGPRFSAS.

Helical transmembrane passes span Leu5–Leu25, Gly28–Leu48, Ala59–Glu79, and Leu84–Gly104.

The protein belongs to the UPF0060 family.

Its subcellular location is the cell inner membrane. This Pseudomonas fluorescens (strain Pf0-1) protein is UPF0060 membrane protein Pfl01_4105.